The primary structure comprises 1110 residues: RNA2 polyprotein (1110 aa).

The segment at 195 to 215 (VHPGGPALPPPPPPPPIQKPP) is disordered. Residues 200–213 (PALPPPPPPPPIQK) are compositionally biased toward pro residues.

This sequence belongs to the nepoviruses RNA2 polyprotein family. In terms of processing, specific enzymatic cleavages in vivo by the P1 encoded 3C-like protease yield mature proteins.

It localises to the host cell junction. It is found in the host plasmodesma. The protein localises to the virion. In terms of biological role, implicated in RNA2 replication. Could also be required for nematode transmission of the virus. Functionally, transports viral genome to neighboring plant cells directly through plasmosdesmata, without any budding. The movement protein allows efficient cell to cell propagation, by bypassing the host cell wall barrier. Acts by forming a tubular structure at the host plasmodesmata, enlarging it enough to allow free passage of virion capsids. The protein is RNA2 polyprotein of Arabis mosaic virus (isolate NW) (ArMV).